The chain runs to 130 residues: MAQIRYYATGRRKTSVAKVWLSPGNGKIIVNDKNMEEYFPLETLRIIVKQPLTLTETLNKYDVIAKVKGGGLSGQAGALRHGIARALVLADPTLRPVLKKAGFLTRDPRMVERKKYGLKKARRAPQFSKR.

The protein belongs to the universal ribosomal protein uS9 family.

In Caldicellulosiruptor saccharolyticus (strain ATCC 43494 / DSM 8903 / Tp8T 6331), this protein is Small ribosomal subunit protein uS9.